Consider the following 48-residue polypeptide: Large ribosomal subunit protein bL32 (48 aa).

Residues 28–48 (VKDKDGSWKMPHRINKTTGEY) form a disordered region.

Belongs to the bacterial ribosomal protein bL32 family.

This Campylobacter concisus (strain 13826) protein is Large ribosomal subunit protein bL32.